A 115-amino-acid polypeptide reads, in one-letter code: Ribonuclease P protein component (115 aa).

It belongs to the RnpA family. Consists of a catalytic RNA component (M1 or rnpB) and a protein subunit.

It carries out the reaction Endonucleolytic cleavage of RNA, removing 5'-extranucleotides from tRNA precursor.. Functionally, RNaseP catalyzes the removal of the 5'-leader sequence from pre-tRNA to produce the mature 5'-terminus. It can also cleave other RNA substrates such as 4.5S RNA. The protein component plays an auxiliary but essential role in vivo by binding to the 5'-leader sequence and broadening the substrate specificity of the ribozyme. The polypeptide is Ribonuclease P protein component (Symbiobacterium thermophilum (strain DSM 24528 / JCM 14929 / IAM 14863 / T)).